A 310-amino-acid chain; its full sequence is Protoheme IX farnesyltransferase (310 aa).

9 helical membrane passes run V30–A47, G50–G70, L102–L122, W126–L146, I152–I172, V181–L201, I228–A248, I251–F271, and A286–L306.

Belongs to the UbiA prenyltransferase family. Protoheme IX farnesyltransferase subfamily.

It localises to the cell inner membrane. It carries out the reaction heme b + (2E,6E)-farnesyl diphosphate + H2O = Fe(II)-heme o + diphosphate. It functions in the pathway porphyrin-containing compound metabolism; heme O biosynthesis; heme O from protoheme: step 1/1. Converts heme B (protoheme IX) to heme O by substitution of the vinyl group on carbon 2 of heme B porphyrin ring with a hydroxyethyl farnesyl side group. In Koribacter versatilis (strain Ellin345), this protein is Protoheme IX farnesyltransferase.